The following is a 440-amino-acid chain: tRNA-2-methylthio-N(6)-dimethylallyladenosine synthase (440 aa).

The MTTase N-terminal domain maps to 4–120 (NYVYIETFGC…LNDMVLAAER (117 aa)). [4Fe-4S] cluster-binding residues include cysteine 13, cysteine 49, cysteine 83, cysteine 158, cysteine 162, and cysteine 165. A Radical SAM core domain is found at 144–374 (GTARISSFVT…QALQKRTTME (231 aa)). The TRAM domain occupies 377–439 (DVLLGTRQTV…QNSLLGELLP (63 aa)).

This sequence belongs to the methylthiotransferase family. MiaB subfamily. Monomer. The cofactor is [4Fe-4S] cluster.

The protein resides in the cytoplasm. The enzyme catalyses N(6)-dimethylallyladenosine(37) in tRNA + (sulfur carrier)-SH + AH2 + 2 S-adenosyl-L-methionine = 2-methylsulfanyl-N(6)-dimethylallyladenosine(37) in tRNA + (sulfur carrier)-H + 5'-deoxyadenosine + L-methionine + A + S-adenosyl-L-homocysteine + 2 H(+). Catalyzes the methylthiolation of N6-(dimethylallyl)adenosine (i(6)A), leading to the formation of 2-methylthio-N6-(dimethylallyl)adenosine (ms(2)i(6)A) at position 37 in tRNAs that read codons beginning with uridine. The sequence is that of tRNA-2-methylthio-N(6)-dimethylallyladenosine synthase from Pelobacter propionicus (strain DSM 2379 / NBRC 103807 / OttBd1).